Consider the following 227-residue polypeptide: ATP-dependent dethiobiotin synthetase BioD (227 aa).

An ATP-binding site is contributed by 13 to 18 (DIGKTY). T17 lines the Mg(2+) pocket. K38 is a catalytic residue. Residue S42 participates in substrate binding. Residues D55, 116–119 (EGSG), and 179–180 (NN) contribute to the ATP site. Mg(2+) is bound by residues D55 and E116.

It belongs to the dethiobiotin synthetase family. As to quaternary structure, homodimer. Mg(2+) serves as cofactor.

Its subcellular location is the cytoplasm. It carries out the reaction (7R,8S)-7,8-diammoniononanoate + CO2 + ATP = (4R,5S)-dethiobiotin + ADP + phosphate + 3 H(+). Its pathway is cofactor biosynthesis; biotin biosynthesis; biotin from 7,8-diaminononanoate: step 1/2. Catalyzes a mechanistically unusual reaction, the ATP-dependent insertion of CO2 between the N7 and N8 nitrogen atoms of 7,8-diaminopelargonic acid (DAPA, also called 7,8-diammoniononanoate) to form a ureido ring. This is ATP-dependent dethiobiotin synthetase BioD from Clostridium botulinum (strain Alaska E43 / Type E3).